We begin with the raw amino-acid sequence, 354 residues long: Selenide, water dikinase (354 aa).

The active site involves Cys-23. ATP is bound by residues Lys-26 and 54-56; that span reads TSD. Asp-57 contributes to the Mg(2+) binding site. ATP-binding positions include Asp-74, Asp-97, and 145–147; that span reads GHS. Position 97 (Asp-97) interacts with Mg(2+). Asp-233 is a Mg(2+) binding site.

Belongs to the selenophosphate synthase 1 family. Class I subfamily. Homodimer. Requires Mg(2+) as cofactor.

It carries out the reaction hydrogenselenide + ATP + H2O = selenophosphate + AMP + phosphate + 2 H(+). Functionally, synthesizes selenophosphate from selenide and ATP. The protein is Selenide, water dikinase of Burkholderia cenocepacia (strain ATCC BAA-245 / DSM 16553 / LMG 16656 / NCTC 13227 / J2315 / CF5610) (Burkholderia cepacia (strain J2315)).